A 483-amino-acid chain; its full sequence is Betaine aldehyde dehydrogenase (483 aa).

Ile-27 and Asp-93 together coordinate K(+). 149 to 151 (GAW) serves as a coordination point for NAD(+). The Charge relay system role is filled by Lys-161. Position 175 to 178 (175 to 178 (KPSE)) interacts with NAD(+). Val-179 provides a ligand contact to K(+). 228–231 (SVPT) contacts NAD(+). A K(+)-binding site is contributed by Val-243. The active-site Proton acceptor is Glu-249. Residues Gly-251, Cys-283, and Glu-380 each coordinate NAD(+). Cys-283 acts as the Nucleophile in catalysis. A Cysteine sulfenic acid (-SOH) modification is found at Cys-283. Residues Lys-450 and Gly-453 each contribute to the K(+) site. Glu-457 (charge relay system) is an active-site residue.

This sequence belongs to the aldehyde dehydrogenase family. Dimer of dimers. The cofactor is K(+).

The catalysed reaction is betaine aldehyde + NAD(+) + H2O = glycine betaine + NADH + 2 H(+). It participates in amine and polyamine biosynthesis; betaine biosynthesis via choline pathway; betaine from betaine aldehyde: step 1/1. Involved in the biosynthesis of the osmoprotectant glycine betaine. Catalyzes the irreversible oxidation of betaine aldehyde to the corresponding acid. This is Betaine aldehyde dehydrogenase from Cereibacter sphaeroides (strain KD131 / KCTC 12085) (Rhodobacter sphaeroides).